A 518-amino-acid polypeptide reads, in one-letter code: Sugar transport protein MST3 (518 aa).

Topologically, residues methionine 1 to lysine 18 are cytoplasmic. The chain crosses the membrane as a helical span at residues leucine 19–tyrosine 39. The Extracellular segment spans residues aspartate 40–glutamine 80. The helical transmembrane segment at leucine 81 to alanine 101 threads the bilayer. The Cytoplasmic segment spans residues threonine 102 to glycine 117. A helical membrane pass occupies residues leucine 118 to valine 138. The Extracellular segment spans residues glycine 139–arginine 140. Residues isoleucine 141–methionine 161 form a helical membrane-spanning segment. The Cytoplasmic portion of the chain corresponds to alanine 162–arginine 167. A helical transmembrane segment spans residues glycine 168–isoleucine 188. The Extracellular segment spans residues asparagine 189–arginine 202. Residues valine 203–proline 223 traverse the membrane as a helical segment. Topologically, residues aspartate 224–cysteine 290 are cytoplasmic. The chain crosses the membrane as a helical span at residues isoleucine 291–phenylalanine 311. Residues aspartate 312–leucine 322 are Extracellular-facing. A helical membrane pass occupies residues methionine 323–valine 343. Residues aspartate 344–leucine 351 lie on the Cytoplasmic side of the membrane. The chain crosses the membrane as a helical span at residues phenylalanine 352–valine 372. Over lysine 373 to alanine 387 the chain is Extracellular. A helical transmembrane segment spans residues alanine 388–leucine 408. Over glycine 409–serine 427 the chain is Cytoplasmic. The helical transmembrane segment at isoleucine 428 to leucine 448 threads the bilayer. At cysteine 449 to lysine 452 the chain is on the extracellular side. The chain crosses the membrane as a helical span at residues phenylalanine 453–phenylalanine 473. Residues leucine 474–proline 518 are Cytoplasmic-facing.

The protein belongs to the major facilitator superfamily. Sugar transporter (TC 2.A.1.1) family. In terms of tissue distribution, highly expressed in roots. Expressed in xylem and sclerenchyma cells of roots. Expressed at low levels in leaves.

The protein resides in the membrane. Its function is as follows. Mediates active uptake of hexoses by sugar:proton symport. Can transport glucose, xylose and 3-O-methylglucose. May be involved in the accumulation of monosaccharides required for cell wall synthesis during root development. This chain is Sugar transport protein MST3, found in Oryza sativa subsp. japonica (Rice).